Here is a 280-residue protein sequence, read N- to C-terminus: Eukaryotic translation initiation factor 3 subunit F-1 (280 aa).

One can recognise an MPN domain in the interval 8 to 138 (VRVHPVVLFQ…LRAYVCIQLG (131 aa)).

It belongs to the eIF-3 subunit F family. As to quaternary structure, component of the eukaryotic translation initiation factor 3 (eIF-3) complex. The eIF-3 complex interacts with pix.

It localises to the cytoplasm. Component of the eukaryotic translation initiation factor 3 (eIF-3) complex, which is involved in protein synthesis of a specialized repertoire of mRNAs and, together with other initiation factors, stimulates binding of mRNA and methionyl-tRNAi to the 40S ribosome. The eIF-3 complex specifically targets and initiates translation of a subset of mRNAs involved in cell proliferation. This Drosophila ananassae (Fruit fly) protein is Eukaryotic translation initiation factor 3 subunit F-1.